A 315-amino-acid polypeptide reads, in one-letter code: Olfactory receptor 2V2 (315 aa).

Residues methionine 1–leucine 26 lie on the Extracellular side of the membrane. The N-linked (GlcNAc...) asparagine glycan is linked to asparagine 6. Residues valine 27–isoleucine 50 traverse the membrane as a helical segment. The Cytoplasmic portion of the chain corresponds to tyrosine 51–threonine 58. The chain crosses the membrane as a helical span at residues proline 59–proline 80. Residues lysine 81–glutamine 101 are Extracellular-facing. Cysteines 98 and 190 form a disulfide. A helical membrane pass occupies residues isoleucine 102–tyrosine 121. Residues aspartate 122–arginine 140 lie on the Cytoplasmic side of the membrane. The chain crosses the membrane as a helical span at residues valine 141–isoleucine 159. Residues glutamine 160–phenylalanine 196 lie on the Extracellular side of the membrane. Residues glutamate 197 to alanine 220 form a helical membrane-spanning segment. The Cytoplasmic segment spans residues histidine 221–lysine 237. The chain crosses the membrane as a helical span at residues alanine 238 to tyrosine 260. The Extracellular portion of the chain corresponds to leucine 261–lysine 273. Residues valine 274 to leucine 293 traverse the membrane as a helical segment. Residues arginine 294–histidine 315 are Cytoplasmic-facing.

The protein belongs to the G-protein coupled receptor 1 family.

Its subcellular location is the cell membrane. Functionally, odorant receptor. The sequence is that of Olfactory receptor 2V2 (OR2V2) from Homo sapiens (Human).